Reading from the N-terminus, the 460-residue chain is Hydroxymethylglutaryl-CoA synthase MYCGRDRAFT_54740 (460 aa).

Alanine 35 lines the (3S)-3-hydroxy-3-methylglutaryl-CoA pocket. The active-site Proton donor/acceptor is the glutamate 86. Residues cysteine 120, asparagine 158, threonine 162, serine 212, histidine 262, lysine 271, asparagine 339, and serine 373 each coordinate (3S)-3-hydroxy-3-methylglutaryl-CoA. Cysteine 120 acts as the Acyl-thioester intermediate in catalysis. The active-site Proton donor/acceptor is histidine 262.

Belongs to the thiolase-like superfamily. HMG-CoA synthase family.

The catalysed reaction is acetoacetyl-CoA + acetyl-CoA + H2O = (3S)-3-hydroxy-3-methylglutaryl-CoA + CoA + H(+). The protein operates within siderophore biosynthesis. Hydroxymethylglutaryl-CoA synthase involved in the biosynthesis of a ferrichrome A-like siderophors which may contribute to organismal virulence. The first step of siderophore biosynthesis is performed by the HMG-CoA synthase (HMGS) MYCGRDRAFT_54740 which catalyzes the generation of HMG-CoA and CoA using acetoacetyl-CoA and acetyl-CoA as substrates. The enoyl-CoA isomerase/hydratase MYCGRDRAFT_76805 then catalyzes the conversion of HMG-CoA to methylglutaconyl-CoA. The acyltransferase MYCGRDRAFT_85486 then fuses methylglutaconyl-CoA with hydroxyornithine to yield methylglutaconyl hydroxyornithine. Methylglutaconyl hydroxyornithine is then available for use by the nonribosomal peptide synthetase NRPS2 to generate the ferrichrome A-like siderophore. The polypeptide is Hydroxymethylglutaryl-CoA synthase MYCGRDRAFT_54740 (ERG13) (Zymoseptoria tritici (strain CBS 115943 / IPO323) (Speckled leaf blotch fungus)).